The chain runs to 780 residues: Striatin (780 aa).

The stretch at 53 to 120 (LHFLQHEWAR…QERAKYHKLK (68 aa)) forms a coiled coil. Residues 55–63 (FLQHEWARF) form a caveolin-binding region. The tract at residues 123–150 (TELNQGDMKPPSYDSDEGNETEVQPQQN) is disordered. The residue at position 137 (Ser137) is a Phosphoserine. Residues 149-166 (QNSQLMWKQGRQLLRQYL) form a calmodulin-binding region. Thr225 carries the phosphothreonine modification. Phosphoserine is present on residues Ser227, Ser229, Ser245, and Ser259. 3 disordered regions span residues 289–312 (DFLVTSEEGDNESRSAGDGTDWEK), 334–353 (EQYKKERKGKKGVKRPNRSK), and 364–392 (VDELPSLQPSVGSPSRPSSSRLPEQELSR). Residues 299-312 (NESRSAGDGTDWEK) show a composition bias toward basic and acidic residues. Positions 338 to 351 (KERKGKKGVKRPNR) are enriched in basic residues. WD repeat units follow at residues 461–500 (SHFDGIRALAFHPIEPVLITASEDHTLKMWNLQKTAPAKK), 514–553 (AHKGPVLCVVMSSNGEQCYSGGTDGRIQSWSTTNPNVDPY), 567–606 (GHTDAVWGLAYSAAHQRLLSCSADGTLRLWNTTEVAPALS), 662–701 (SSSCQINRVISHPTLPISITAHEDRHIKFYDNNTGKLIHS), 704–743 (AHLEAVTSLAVDPNGLYLMSGSHDCSIRLWNLESKTCIQE), and 750–780 (KFEESIHDVAFHPSKCYIASAGADALAKVFV).

Belongs to the WD repeat striatin family. As to quaternary structure, part of the core of STRIPAK complexes composed of PP2A catalytic and scaffolding subunits, the striatins (PP2A regulatory subunits), the striatin-associated proteins MOB4, STRIP1 and STRIP2, PDCD10 and members of the STE20 kinases, such as STK24 and STK26. Interacts with CTTNBP2; this interaction may regulate dendritic spine distribution of STRN. Activation of glutamate receptors weakens the interaction with CTTNBP2. In terms of tissue distribution, mainly expressed in brain but is also expressed at low levels in various tissues such as kidney, spleen, skeletal muscle and lung.

It is found in the cytoplasm. Its subcellular location is the membrane. The protein resides in the cell projection. The protein localises to the dendritic spine. Its function is as follows. Calmodulin-binding scaffolding protein which is the center of the striatin-interacting phosphatase and kinase (STRIPAK) complexes. STRIPAK complexes have critical roles in protein (de)phosphorylation and are regulators of multiple signaling pathways including Hippo, MAPK, nuclear receptor and cytoskeleton remodeling. Different types of STRIPAK complexes are involved in a variety of biological processes such as cell growth, differentiation, apoptosis, metabolism and immune regulation. The polypeptide is Striatin (Strn) (Mus musculus (Mouse)).